The primary structure comprises 180 residues: MNPAPNLVMIGPMGAGKSSIGRRIAKHFNLHFADTDHAIVERAGTSISTIFKYSGEPEFRRLEREVLYDLLNHENRLIATGGGTILDPENRHRMQKRGFVVFLKINVNTQLERLAHDRYRPLLQQIDRKQVLSDLYATRQPLYQKIADMIVTTDHMSPNTATAQLILDLTAHWQKSSNTA.

Residue 14 to 19 participates in ATP binding; sequence GAGKSS. Ser18 serves as a coordination point for Mg(2+). Asp36, Arg60, and Gly82 together coordinate substrate. Arg120 provides a ligand contact to ATP. Arg139 contacts substrate.

It belongs to the shikimate kinase family. Monomer. Mg(2+) is required as a cofactor.

It localises to the cytoplasm. It catalyses the reaction shikimate + ATP = 3-phosphoshikimate + ADP + H(+). Its pathway is metabolic intermediate biosynthesis; chorismate biosynthesis; chorismate from D-erythrose 4-phosphate and phosphoenolpyruvate: step 5/7. In terms of biological role, catalyzes the specific phosphorylation of the 3-hydroxyl group of shikimic acid using ATP as a cosubstrate. The sequence is that of Shikimate kinase from Xylella fastidiosa (strain M23).